Reading from the N-terminus, the 369-residue chain is Carbamoyl phosphate synthase small chain (369 aa).

The CPSase stretch occupies residues 1 to 168 (MYGILVLEDG…KKVVKYPAKD (168 aa)). Residues S45, G220, and G222 each contribute to the L-glutamine site. The Glutamine amidotransferase type-1 domain occupies 172 to 364 (SCVVIDCGVK…VALGMKFKQE (193 aa)). Catalysis depends on C247, which acts as the Nucleophile. Positions 248, 251, 289, 291, and 292 each coordinate L-glutamine. Residues H337 and E339 contribute to the active site.

The protein belongs to the CarA family. Composed of two chains; the small (or glutamine) chain promotes the hydrolysis of glutamine to ammonia, which is used by the large (or ammonia) chain to synthesize carbamoyl phosphate. Tetramer of heterodimers (alpha,beta)4.

It catalyses the reaction hydrogencarbonate + L-glutamine + 2 ATP + H2O = carbamoyl phosphate + L-glutamate + 2 ADP + phosphate + 2 H(+). The enzyme catalyses L-glutamine + H2O = L-glutamate + NH4(+). It functions in the pathway amino-acid biosynthesis; L-arginine biosynthesis; carbamoyl phosphate from bicarbonate: step 1/1. Its pathway is pyrimidine metabolism; UMP biosynthesis via de novo pathway; (S)-dihydroorotate from bicarbonate: step 1/3. Functionally, small subunit of the glutamine-dependent carbamoyl phosphate synthetase (CPSase). CPSase catalyzes the formation of carbamoyl phosphate from the ammonia moiety of glutamine, carbonate, and phosphate donated by ATP, constituting the first step of 2 biosynthetic pathways, one leading to arginine and/or urea and the other to pyrimidine nucleotides. The small subunit (glutamine amidotransferase) binds and cleaves glutamine to supply the large subunit with the substrate ammonia. This is Carbamoyl phosphate synthase small chain from Methanococcus vannielii (strain ATCC 35089 / DSM 1224 / JCM 13029 / OCM 148 / SB).